Consider the following 142-residue polypeptide: UPF0102 protein Synpcc7942_0312 (142 aa).

Belongs to the UPF0102 family.

The sequence is that of UPF0102 protein Synpcc7942_0312 from Synechococcus elongatus (strain ATCC 33912 / PCC 7942 / FACHB-805) (Anacystis nidulans R2).